A 252-amino-acid polypeptide reads, in one-letter code: MNILLTNDDGIEAEGINTLAELLSKYHDVTMVAPENQRSASSHSITIYEPIIVKQVKKPYNIEAYSISGTPADCVRVALDKLVPDNIDMVISGINKGLNIGNDILYSGTVSAAIEGAMYKVPSMAVSAQFIKNKKENYKIAAKYALGMLNRLKKEDLKNDVVLNLNIPFCSEEEIKGIKVCKVGNKIFNTRFSEEIDEEGNKVLKLEGDINKDIYEGTDVYYIRNKYVTLTPLHYDLTNFNILEETEQLFLS.

Residues Asp8, Asp9, Ser39, and Asn95 each contribute to the a divalent metal cation site.

This sequence belongs to the SurE nucleotidase family. A divalent metal cation is required as a cofactor.

The protein resides in the cytoplasm. It carries out the reaction a ribonucleoside 5'-phosphate + H2O = a ribonucleoside + phosphate. Nucleotidase that shows phosphatase activity on nucleoside 5'-monophosphates. This is 5'-nucleotidase SurE from Clostridium botulinum (strain Kyoto / Type A2).